The sequence spans 397 residues: Elongation factor Tu (397 aa).

In terms of domain architecture, tr-type G spans 10-206; sequence KPHVNIGTIG…AVDTSIPQPE (197 aa). Positions 19 to 26 are G1; that stretch reads GHIDHGKT. 19–26 provides a ligand contact to GTP; the sequence is GHIDHGKT. Thr-26 serves as a coordination point for Mg(2+). A G2 region spans residues 62-66; that stretch reads GITIS. The tract at residues 83–86 is G3; sequence DCPG. Residues 83-87 and 138-141 each bind GTP; these read DCPGH and NKSD. The segment at 138 to 141 is G4; sequence NKSD. The tract at residues 176 to 178 is G5; that stretch reads SAL.

It belongs to the TRAFAC class translation factor GTPase superfamily. Classic translation factor GTPase family. EF-Tu/EF-1A subfamily. Monomer.

The protein resides in the cytoplasm. The catalysed reaction is GTP + H2O = GDP + phosphate + H(+). In terms of biological role, GTP hydrolase that promotes the GTP-dependent binding of aminoacyl-tRNA to the A-site of ribosomes during protein biosynthesis. This chain is Elongation factor Tu, found in Salinispora arenicola (strain CNS-205).